Consider the following 137-residue polypeptide: Large-conductance mechanosensitive channel (137 aa).

Transmembrane regions (helical) follow at residues Phe10–Gly30 and Gly76–Ile96.

This sequence belongs to the MscL family. Homopentamer.

The protein resides in the cell inner membrane. Its function is as follows. Channel that opens in response to stretch forces in the membrane lipid bilayer. May participate in the regulation of osmotic pressure changes within the cell. This chain is Large-conductance mechanosensitive channel, found in Enterobacter sp. (strain 638).